The chain runs to 258 residues: MVQQLSLYSVIDEGSFDLLIATISALSGRSPVLFANYNHVAHPNPNYAIEKVNAKNQLVEQTRVQLMQEIPFEKLQTEEYSYKLCTKMTGDGPPIETEYLNSLMRSCGDGTRPWSLSLWDIPSAGKDRKVCTQAVVESVVTSTGGAHSSILSFLAELGYVPGYQFVQLGTQFYLENGIVFQISKLWALHGESGKTSAVTKDGFLIKAYLNVPKATDLESINQGTAHLQQLKRELRDYLELSIPDRKSMDSRVGHLNDF.

The protein belongs to the Mediator complex subunit 18 family. In terms of assembly, component of the Mediator complex.

It is found in the nucleus. Component of the Mediator complex, a coactivator involved in the regulated transcription of nearly all RNA polymerase II-dependent genes. Mediator functions as a bridge to convey information from gene-specific regulatory proteins to the basal RNA polymerase II transcription machinery. Mediator is recruited to promoters by direct interactions with regulatory proteins and serves as a scaffold for the assembly of a functional preinitiation complex with RNA polymerase II and the general transcription factors. In Eremothecium gossypii (strain ATCC 10895 / CBS 109.51 / FGSC 9923 / NRRL Y-1056) (Yeast), this protein is Mediator of RNA polymerase II transcription subunit 18 (SRB5).